The chain runs to 103 residues: Acyl carrier protein homolog (103 aa).

The 85-residue stretch at 3 to 87 (ELTSEIKKEI…ETLEKVVQTT (85 aa)) folds into the Carrier domain. At S45 the chain carries O-(pantetheine 4'-phosphoryl)serine.

4'-phosphopantetheine is transferred from CoA to a specific serine of the apo-ACP-like protein.

It is found in the cytoplasm. Its function is as follows. Acyl carrier protein. This chain is Acyl carrier protein homolog, found in Clostridium acetobutylicum (strain ATCC 824 / DSM 792 / JCM 1419 / IAM 19013 / LMG 5710 / NBRC 13948 / NRRL B-527 / VKM B-1787 / 2291 / W).